Here is a 198-residue protein sequence, read N- to C-terminus: ATP-dependent Clp protease proteolytic subunit (198 aa).

Ser-98 functions as the Nucleophile in the catalytic mechanism. The active site involves His-123.

The protein belongs to the peptidase S14 family. As to quaternary structure, fourteen ClpP subunits assemble into 2 heptameric rings which stack back to back to give a disk-like structure with a central cavity, resembling the structure of eukaryotic proteasomes.

It is found in the cytoplasm. The enzyme catalyses Hydrolysis of proteins to small peptides in the presence of ATP and magnesium. alpha-casein is the usual test substrate. In the absence of ATP, only oligopeptides shorter than five residues are hydrolyzed (such as succinyl-Leu-Tyr-|-NHMec, and Leu-Tyr-Leu-|-Tyr-Trp, in which cleavage of the -Tyr-|-Leu- and -Tyr-|-Trp bonds also occurs).. Cleaves peptides in various proteins in a process that requires ATP hydrolysis. Has a chymotrypsin-like activity. Plays a major role in the degradation of misfolded proteins. In Listeria innocua serovar 6a (strain ATCC BAA-680 / CLIP 11262), this protein is ATP-dependent Clp protease proteolytic subunit.